The chain runs to 1187 residues: Myelin transcription factor 1-like protein (1187 aa).

The tract at residues M1–E22 is disordered. The CCHHC-type 1 zinc finger occupies E22 to D65. Residues C31, C36, H49, and C55 each contribute to the Zn(2+) site. Disordered regions lie at residues P56 to C178 and R221 to S248. The segment covering E89–E172 has biased composition (acidic residues). The residue at position 251 (S251) is a Phosphoserine. Disordered stretches follow at residues S343–E422 and R450–G514. The span at E344–V358 shows a compositional bias: polar residues. 4 stretches are compositionally biased toward basic and acidic residues: residues V362–Y377, A401–D412, R450–V488, and D496–K506. CCHHC-type zinc fingers lie at residues S498–I541 and L542–K585. Residues C507, C512, H525, C531, C551, C556, H569, and C575 each coordinate Zn(2+). The segment at A686–S710 is disordered. CCHHC-type zinc fingers lie at residues L897–I940, D946–G989, and K999–A1042. The Zn(2+) site is built by C906, C911, H924, C930, C955, C960, H973, C979, C1008, C1013, H1026, and C1032. Residues N1058–S1132 are a coiled coil.

It belongs to the MYT1 family. In terms of assembly, interacts with SIN3B. As to expression, brain.

The protein localises to the nucleus. It localises to the chromosome. In terms of biological role, transcription factor that plays a key role in neuronal differentiation by specifically repressing expression of non-neuronal genes during neuron differentiation. In contrast to other transcription repressors that inhibit specific lineages, mediates repression of multiple differentiation programs. Also represses expression of negative regulators of neurogenesis, such as members of the Notch signaling pathway, including HES1. The combination of three transcription factors, ASCL1, POU3F2/BRN2 and MYT1L, is sufficient to reprogram fibroblasts and other somatic cells into induced neuronal (iN) cells in vitro. Directly binds the 5'-AAGTT-3' core motif present on the promoter of target genes and represses transcription by recruiting a multiprotein complex containing SIN3B. The 5'-AAGTT-3' core motif is absent from the promoter of neural genes. This chain is Myelin transcription factor 1-like protein, found in Mus musculus (Mouse).